Here is a 532-residue protein sequence, read N- to C-terminus: Flavin-containing monooxygenase 1 (532 aa).

Residues M1–T510 are Lumenal-facing. Residues G9–S13, E32, L40–W41, and N61–S62 contribute to the FAD site. NADP(+) is bound by residues S60–N61 and S195–D198. The chain crosses the membrane as a helical span at residues F511–F531. Residue L532 is a topological domain, cytoplasmic.

It belongs to the FMO family. FAD is required as a cofactor. As to expression, expressed in liver, lung and kidney and to a lesser extent in the heart and brain.

Its subcellular location is the endoplasmic reticulum membrane. It carries out the reaction hypotaurine + NADPH + O2 + H(+) = taurine + NADP(+) + H2O. The enzyme catalyses hypotaurine + NADH + O2 + H(+) = taurine + NAD(+) + H2O. It catalyses the reaction trimethylamine + NADPH + O2 = trimethylamine N-oxide + NADP(+) + H2O. The catalysed reaction is N,N-dimethylaniline + NADPH + O2 + H(+) = N,N-dimethylaniline N-oxide + NADP(+) + H2O. Its function is as follows. Broad spectrum monooxygenase that catalyzes the oxygenation of a wide variety of nitrogen- and sulfur-containing compounds including xenobiotics. Catalyzes the S-oxygenation of hypotaurine to produce taurine, an organic osmolyte involved in cell volume regulation as well as a variety of cytoprotective and developmental processes. In vitro, catalyzes the N-oxygenation of trimethylamine (TMA) to produce trimethylamine N-oxide (TMAO) and could therefore participate to the detoxification of this compound that is generated by the action of gut microbiota from dietary precursors such as choline, choline containing compounds, betaine or L-carnitine. The sequence is that of Flavin-containing monooxygenase 1 from Rattus norvegicus (Rat).